Consider the following 833-residue polypeptide: Leucine--tRNA ligase (833 aa).

The short motif at 41-52 is the 'HIGH' region element; sequence PYPSGAGLHVGH. A 'KMSKS' region motif is present at residues 610 to 614; it reads KMSKS. Lys-613 contacts ATP.

The protein belongs to the class-I aminoacyl-tRNA synthetase family.

The protein resides in the cytoplasm. The enzyme catalyses tRNA(Leu) + L-leucine + ATP = L-leucyl-tRNA(Leu) + AMP + diphosphate. The protein is Leucine--tRNA ligase of Streptococcus suis (strain 98HAH33).